We begin with the raw amino-acid sequence, 188 residues long: Adenine phosphoribosyltransferase (188 aa).

This sequence belongs to the purine/pyrimidine phosphoribosyltransferase family. In terms of assembly, homodimer.

It is found in the cytoplasm. It catalyses the reaction AMP + diphosphate = 5-phospho-alpha-D-ribose 1-diphosphate + adenine. Its pathway is purine metabolism; AMP biosynthesis via salvage pathway; AMP from adenine: step 1/1. Catalyzes a salvage reaction resulting in the formation of AMP, that is energically less costly than de novo synthesis. The protein is Adenine phosphoribosyltransferase of Paraburkholderia xenovorans (strain LB400).